A 279-amino-acid polypeptide reads, in one-letter code: Tryptophan synthase alpha chain (279 aa).

Catalysis depends on proton acceptor residues E63 and D74.

This sequence belongs to the TrpA family. In terms of assembly, tetramer of two alpha and two beta chains.

It catalyses the reaction (1S,2R)-1-C-(indol-3-yl)glycerol 3-phosphate + L-serine = D-glyceraldehyde 3-phosphate + L-tryptophan + H2O. It participates in amino-acid biosynthesis; L-tryptophan biosynthesis; L-tryptophan from chorismate: step 5/5. Functionally, the alpha subunit is responsible for the aldol cleavage of indoleglycerol phosphate to indole and glyceraldehyde 3-phosphate. The protein is Tryptophan synthase alpha chain of Prochlorococcus marinus subsp. pastoris (strain CCMP1986 / NIES-2087 / MED4).